The primary structure comprises 273 residues: NH(3)-dependent NAD(+) synthetase (273 aa).

45–52 lines the ATP pocket; the sequence is GISGGQDS. Asp-51 lines the Mg(2+) pocket. Arg-139 is a binding site for deamido-NAD(+). Residue Thr-159 participates in ATP binding. Glu-164 serves as a coordination point for Mg(2+). Positions 172 and 179 each coordinate deamido-NAD(+). ATP contacts are provided by Lys-188 and Thr-210. 259 to 260 provides a ligand contact to deamido-NAD(+); that stretch reads HK.

It belongs to the NAD synthetase family. As to quaternary structure, homodimer.

It catalyses the reaction deamido-NAD(+) + NH4(+) + ATP = AMP + diphosphate + NAD(+) + H(+). It participates in cofactor biosynthesis; NAD(+) biosynthesis; NAD(+) from deamido-NAD(+) (ammonia route): step 1/1. Catalyzes the ATP-dependent amidation of deamido-NAD to form NAD. Uses ammonia as a nitrogen source. This Bacillus pumilus (strain SAFR-032) protein is NH(3)-dependent NAD(+) synthetase.